Here is a 374-residue protein sequence, read N- to C-terminus: Protein STRICTOSIDINE SYNTHASE-LIKE 10 (374 aa).

The first 18 residues, 1-18 (MTMMIITVFLTVIAAVLA), serve as a signal peptide directing secretion. N50 carries an N-linked (GlcNAc...) asparagine glycan.

The protein belongs to the strictosidine synthase family.

It is found in the vacuole. This Arabidopsis thaliana (Mouse-ear cress) protein is Protein STRICTOSIDINE SYNTHASE-LIKE 10.